The chain runs to 454 residues: Ornithine aminotransferase (454 aa).

Residues glycine 124, threonine 125, and glutamine 267 each contribute to the pyridoxal 5'-phosphate site. Lysine 293 is subject to N6-(pyridoxal phosphate)lysine. Threonine 321 serves as a coordination point for pyridoxal 5'-phosphate.

It belongs to the class-III pyridoxal-phosphate-dependent aminotransferase family. In terms of assembly, homotetramer; dimer of dimers. Pyridoxal 5'-phosphate is required as a cofactor.

It catalyses the reaction L-ornithine + 2-oxoglutarate = L-glutamate 5-semialdehyde + L-glutamate. The catalysed reaction is L-lysine + 2-oxoglutarate = (S)-2-amino-6-oxohexanoate + L-glutamate. Its function is as follows. Catalyzes the conversion of L-ornithine and 2-oxoglutarate to L-glutamate semialdehyde and L-glutamate. L-ornithine is the best substrate, but the enzyme also shows good activity toward L-lysine, and low activity toward D-ornithine, D-lysine, 5-aminovalerate, 6-aminohexanoate and GABA. The enzyme activity is specific for 2-oxoglutarate. The protein is Ornithine aminotransferase of Pyrococcus horikoshii (strain ATCC 700860 / DSM 12428 / JCM 9974 / NBRC 100139 / OT-3).